Here is a 222-residue protein sequence, read N- to C-terminus: MGVAGPWVLRVGLGLGAFALLLQGLRGWLACKRYEFQPAEIAELARHHAGLDHELAFSKIIVELRKKHPGHILPDEDLQWVFVNAGGWMGSMCLLHASLTEYVLLFGTAIDTGGHSGRYWAEIYDTIISGTFRQWKEGTTRSEIYYPGDTIVHQAGEATSVQWSAGTWMVEYGRGFVPSTLAFALADTLFSTQDFITLFYTLRAYTKGLLLEASAFFSTLGC.

The Lumenal segment spans residues 1–7 (MGVAGPW). A helical membrane pass occupies residues 8–29 (VLRVGLGLGAFALLLQGLRGWL). Topologically, residues 30 to 222 (ACKRYEFQPA…ASAFFSTLGC (193 aa)) are cytoplasmic. The interval 98–105 (SLTEYVLL) is important for ligand-binding. Positions 176-222 (FVPSTLAFALADTLFSTQDFITLFYTLRAYTKGLLLEASAFFSTLGC) are C-terminal hydrophobic region.

Belongs to the ERG2 family. In terms of assembly, homotrimer.

It localises to the nucleus inner membrane. It is found in the nucleus outer membrane. The protein localises to the nucleus envelope. The protein resides in the cytoplasmic vesicle. Its subcellular location is the endoplasmic reticulum membrane. It localises to the membrane. Its function is as follows. May function in lipid transport from the endoplasmic reticulum and be involved in a wide array of cellular functions probably through regulation of the biogenesis of lipid microdomains at the plasma membrane. May regulate calcium efflux at the endoplasmic reticulum. This is Sigma non-opioid intracellular receptor 1 (SIGMAR1) from Gallus gallus (Chicken).